A 364-amino-acid chain; its full sequence is Rhomboid domain-containing protein 2 (364 aa).

5 helical membrane passes run 11–31, 63–83, 100–120, 158–178, and 184–204; these read WCLC…SLLV, LVTY…AIII, CFFT…FEAV, FGMV…SWLI, and LSNV…CYSI. 2 disordered regions span residues 242–282 and 317–364; these read AQSR…KLAS and SSVY…VPMP. Polar residues-rich tracts occupy residues 267–276 and 317–329; these read HPVSQTQHAS and SSVY…TSLG.

It belongs to the peptidase S54 family.

Its subcellular location is the golgi apparatus. It is found in the cis-Golgi network membrane. The polypeptide is Rhomboid domain-containing protein 2 (RHBDD2) (Homo sapiens (Human)).